Reading from the N-terminus, the 433-residue chain is Arrestin domain-containing protein 1 (433 aa).

2 disordered regions span residues 296 to 322 (GLGL…AEAA) and 349 to 372 (LSSV…PLHP). Over residues 301-312 (PGAPPLVVPSAP) the composition is skewed to pro residues. 2 short sequence motifs (PPxY motif) span residues 402-405 (PPEY) and 415-418 (PPSY).

It belongs to the arrestin family. Interacts (via PPxY motifs) with ITCH (via WW domains); the interaction is direct and participates in the recruitment of the ubiquitin-protein ligase ITCH to the NOTCH1 receptor. Interacts with ARRB1 and ARRB2; the interaction is direct. Interacts with TSG101; may recruit TSG101 to the plasma membrane. Interacts (via PPxY motifs) with WWP2 (via WW domains); ubiquitinates ARRDC1. Interacts with SLC11A2; controls the incorporation of SLC11A2 into extracellular vesicles through an ubiquitination-dependent mechanism. Interacts with WWP1 (via WW domains). Interacts with NEDD4 (via WW domains). Interacts with PDCD6IP. In terms of processing, ubiquitinated. Ubiquitination by WWP2; promotes localization to extracellular microvesicles. Ubiquitinated by WWP1.

The protein resides in the cell membrane. Functions as an adapter recruiting ubiquitin-protein ligases to their specific substrates. Through an ubiquitination-dependent mechanism plays for instance a role in the incorporation of SLC11A2 into extracellular vesicles. More generally, plays a role in the extracellular transport of proteins between cells through the release in the extracellular space of microvesicles. By participating in the ITCH-mediated ubiquitination and subsequent degradation of NOTCH1, negatively regulates the NOTCH signaling pathway. The chain is Arrestin domain-containing protein 1 from Homo sapiens (Human).